We begin with the raw amino-acid sequence, 179 residues long: SCAN domain-containing protein 1 (179 aa).

The segment at 1-108 (MAATEPILAA…GSRLGPETFR (108 aa)) is disordered. Over residues 60-80 (AIPTPQAAASAAPELPLGPAP) the composition is skewed to low complexity. One can recognise an SCAN box domain in the interval 108–166 (RQRFRQFRYQDAAGPREAFRQLRELSRQWLRPDIRTKEQIVEMLVQEQLLAILPEAARA).

In terms of assembly, interacts with ZNF202.

It localises to the nucleus. Its function is as follows. May regulate transcriptional activity. The protein is SCAN domain-containing protein 1 (SCAND1) of Pongo pygmaeus (Bornean orangutan).